Here is a 57-residue protein sequence, read N- to C-terminus: Probable mRNA interferase HicA 1 (57 aa).

This sequence belongs to the HicA mRNA interferase family. As to quaternary structure, probably forms a complex with the cognate antitoxin HicB 1 which inhibits the mRNA interferase activity.

In terms of biological role, toxic component of a type II toxin-antitoxin (TA) system. A probable translation-independent mRNA interferase. This Photorhabdus laumondii subsp. laumondii (strain DSM 15139 / CIP 105565 / TT01) (Photorhabdus luminescens subsp. laumondii) protein is Probable mRNA interferase HicA 1 (hicA1).